We begin with the raw amino-acid sequence, 144 residues long: Large ribosomal subunit protein uL16 (144 aa).

It belongs to the universal ribosomal protein uL16 family. As to quaternary structure, part of the 50S ribosomal subunit.

In terms of biological role, binds 23S rRNA and is also seen to make contacts with the A and possibly P site tRNAs. The protein is Large ribosomal subunit protein uL16 of Erythrobacter litoralis (strain HTCC2594).